The primary structure comprises 76 residues: Putative snRNP Sm-like protein (76 aa).

A Sm domain is found at 4–76 (RPLDVIHRSL…VLAISPVDIE (73 aa)).

Belongs to the snRNP Sm proteins family.

In Thermococcus gammatolerans (strain DSM 15229 / JCM 11827 / EJ3), this protein is Putative snRNP Sm-like protein.